A 250-amino-acid polypeptide reads, in one-letter code: Anti-sigma-L factor RslA (250 aa).

Over 1 to 115 (MTMPLRGLGP…VHRRRRRTRL (115 aa)) the chain is Cytoplasmic. A helical transmembrane segment spans residues 116-136 (ITWVASSAAAAVLAIGVLVGV). Residues 137-250 (QGHSAAPQRA…TGQVLLQRSL (114 aa)) are Extracellular-facing.

In terms of assembly, interacts with ECF RNA polymerase sigma factor SigL; this should inhibit the interaction of SigL with the RNA polymerase catalytic core. Post-translationally, probably cleaved within the membrane by Rip1 near the cytoplasmic membrane interface.

It localises to the cell membrane. Its function is as follows. An anti-sigma factor for extracytoplasmic function (ECF) sigma factor SigL. ECF sigma factors are held in an inactive form by an anti-sigma factor until released by regulated intramembrane proteolysis (RIP). RIP occurs when an extracytoplasmic signal triggers a concerted proteolytic cascade to transmit information and elicit cellular responses. The membrane-spanning regulatory substrate protein is first cut extracytoplasmically (site-1 protease, S1P), then within the membrane itself (site-2 protease, S2P, Rip1), while cytoplasmic proteases finish degrading the regulatory protein, liberating the sigma factor. This is Anti-sigma-L factor RslA (rslA) from Mycobacterium tuberculosis (strain ATCC 35801 / TMC 107 / Erdman).